The primary structure comprises 295 residues: Tyrosine recombinase XerD (295 aa).

A Core-binding (CB) domain is found at 1-85 (MNTIIEEYLN…TIRSFHQFAL (85 aa)). Positions 106-289 (KLPDVLEIDE…SKSQIRKMYT (184 aa)) constitute a Tyr recombinase domain. Active-site residues include arginine 146, lysine 170, histidine 241, arginine 244, and histidine 267. Catalysis depends on tyrosine 276, which acts as the O-(3'-phospho-DNA)-tyrosine intermediate.

Belongs to the 'phage' integrase family. XerD subfamily. In terms of assembly, forms a cyclic heterotetrameric complex composed of two molecules of XerC and two molecules of XerD.

It is found in the cytoplasm. Its function is as follows. Site-specific tyrosine recombinase, which acts by catalyzing the cutting and rejoining of the recombining DNA molecules. The XerC-XerD complex is essential to convert dimers of the bacterial chromosome into monomers to permit their segregation at cell division. It also contributes to the segregational stability of plasmids. The protein is Tyrosine recombinase XerD of Staphylococcus epidermidis (strain ATCC 35984 / DSM 28319 / BCRC 17069 / CCUG 31568 / BM 3577 / RP62A).